A 211-amino-acid chain; its full sequence is Small ribosomal subunit protein uS4 (211 aa).

Positions 27–48 (GRKVLERRGSQPPGQHGASVRR) are disordered. In terms of domain architecture, S4 RNA-binding spans 99–162 (RRLDNVVFRL…RKRDYFKDLE (64 aa)).

Belongs to the universal ribosomal protein uS4 family. Part of the 30S ribosomal subunit. Contacts protein S5. The interaction surface between S4 and S5 is involved in control of translational fidelity.

In terms of biological role, one of the primary rRNA binding proteins, it binds directly to 16S rRNA where it nucleates assembly of the body of the 30S subunit. Functionally, with S5 and S12 plays an important role in translational accuracy. The chain is Small ribosomal subunit protein uS4 from Herpetosiphon aurantiacus (strain ATCC 23779 / DSM 785 / 114-95).